Reading from the N-terminus, the 635-residue chain is 1-deoxy-D-xylulose-5-phosphate synthase (635 aa).

Thiamine diphosphate-binding positions include histidine 72 and 113–115 (GHA). A Mg(2+)-binding site is contributed by aspartate 144. Residues 145–146 (GA), asparagine 174, tyrosine 287, and glutamate 370 contribute to the thiamine diphosphate site. Asparagine 174 is a Mg(2+) binding site.

Belongs to the transketolase family. DXPS subfamily. As to quaternary structure, homodimer. It depends on Mg(2+) as a cofactor. Requires thiamine diphosphate as cofactor.

It catalyses the reaction D-glyceraldehyde 3-phosphate + pyruvate + H(+) = 1-deoxy-D-xylulose 5-phosphate + CO2. It participates in metabolic intermediate biosynthesis; 1-deoxy-D-xylulose 5-phosphate biosynthesis; 1-deoxy-D-xylulose 5-phosphate from D-glyceraldehyde 3-phosphate and pyruvate: step 1/1. Its function is as follows. Catalyzes the acyloin condensation reaction between C atoms 2 and 3 of pyruvate and glyceraldehyde 3-phosphate to yield 1-deoxy-D-xylulose-5-phosphate (DXP). In Trichodesmium erythraeum (strain IMS101), this protein is 1-deoxy-D-xylulose-5-phosphate synthase.